The following is a 184-amino-acid chain: ATP-dependent protease subunit HslV (184 aa).

Thr-2 is an active-site residue. The Na(+) site is built by Gly-157, Cys-160, and Thr-163.

The protein belongs to the peptidase T1B family. HslV subfamily. As to quaternary structure, a double ring-shaped homohexamer of HslV is capped on each side by a ring-shaped HslU homohexamer. The assembly of the HslU/HslV complex is dependent on binding of ATP.

It is found in the cytoplasm. It carries out the reaction ATP-dependent cleavage of peptide bonds with broad specificity.. With respect to regulation, allosterically activated by HslU binding. In terms of biological role, protease subunit of a proteasome-like degradation complex believed to be a general protein degrading machinery. In Vibrio vulnificus (strain CMCP6), this protein is ATP-dependent protease subunit HslV.